The following is a 399-amino-acid chain: Probable protein phosphatase 2C 28 (399 aa).

The region spanning 48-356 (EFSMAVVQAN…DDITVIVVFL (309 aa)) is the PPM-type phosphatase domain. Residues Asp87, Gly88, Asp288, and Asp347 each contribute to the Mn(2+) site.

This sequence belongs to the PP2C family. The cofactor is Mg(2+). Mn(2+) serves as cofactor.

The enzyme catalyses O-phospho-L-seryl-[protein] + H2O = L-seryl-[protein] + phosphate. It catalyses the reaction O-phospho-L-threonyl-[protein] + H2O = L-threonyl-[protein] + phosphate. The sequence is that of Probable protein phosphatase 2C 28 from Oryza sativa subsp. japonica (Rice).